Reading from the N-terminus, the 316-residue chain is tRNA dimethylallyltransferase (316 aa).

Gly-17 to Thr-24 is a binding site for ATP. Thr-19 to Thr-24 serves as a coordination point for substrate. Interaction with substrate tRNA regions lie at residues Asp-42–Leu-45, Gln-166–Arg-170, Arg-247–Arg-252, and Lys-280–Arg-287.

The protein belongs to the IPP transferase family. In terms of assembly, monomer. It depends on Mg(2+) as a cofactor.

It catalyses the reaction adenosine(37) in tRNA + dimethylallyl diphosphate = N(6)-dimethylallyladenosine(37) in tRNA + diphosphate. Catalyzes the transfer of a dimethylallyl group onto the adenine at position 37 in tRNAs that read codons beginning with uridine, leading to the formation of N6-(dimethylallyl)adenosine (i(6)A). The protein is tRNA dimethylallyltransferase of Cronobacter sakazakii (strain ATCC BAA-894) (Enterobacter sakazakii).